Consider the following 712-residue polypeptide: TGF-beta-activated kinase 1 and MAP3K7-binding protein 3 (712 aa).

At Ala2 the chain carries N-acetylalanine. Residues 8 to 51 (LDIQVLHDLRQRFPEIPEGVVSQCMLQNNNNLEACCRALSQESS) form the CUE domain. Phosphoserine is present on residues Ser60, Ser101, and Ser103. 4 disordered regions span residues 141–189 (FMNE…HIPR), 227–345 (PGSI…KQGS), 369–447 (TVEP…SPRV), and 475–509 (ERSA…SSGS). Over residues 163 to 173 (MQTGMNPSAMQ) the composition is skewed to polar residues. 2 stretches are compositionally biased toward low complexity: residues 233 to 249 (RQTS…QSTP) and 269 to 290 (YPHQ…IPQS). Positions 322–332 (PPSPSTTPPHP) are enriched in pro residues. Composition is skewed to polar residues over residues 336 to 345 (GPPSYQKQGS) and 371 to 404 (EPSQ…TATT). Position 385 is a phosphoserine (Ser385). The residue at position 404 (Thr404) is a Phosphothreonine. Low complexity predominate over residues 405–417 (PPSSSPSRGISSQ). Residues Ser409 and Ser492 each carry the phosphoserine modification. A Phosphoserine; by MAPKAPK2 and MAPKAPK3 modification is found at Ser506. Residues 517–559 (ALLLHQRARMERLAKQLKLEKEELERLKSEVNGMEHDLMQRRL) adopt a coiled-coil conformation. The interval 609–636 (MNNFYDNIEPGPVVPPKPSKKDSSDPCT) is disordered. Basic and acidic residues predominate over residues 627 to 636 (SKKDSSDPCT). Residue Lys649 forms a Glycyl lysine isopeptide (Lys-Gly) (interchain with G-Cter in ubiquitin) linkage. Residues 658-667 (QAAAADEHRT) show a composition bias toward basic and acidic residues. The tract at residues 658–682 (QAAAADEHRTGSTQSPRTQPRDEDY) is disordered. The RanBP2-type zinc-finger motif lies at 682–712 (YEGAPWNCDSCTFLNHPALNRCEQCEMPRYT). Cys692 carries the post-translational modification (Microbial infection) S-methylcysteine.

As to quaternary structure, interacts with TAB1, TAB2, MAP3K7, TRAF2 and TRAF6. The minimal TAB3-containing complex (TAB1-MAP3K7-TAB3) appears not to contain TAB2. However, it seems sensible to consider that TAB2 may also join this complex and may act in a cooperative manner with TAB3. Interacts with DYNC2I2 (via the WD domains). Interacts with RBCK1. Binds 'Lys-63'-linked polyubiquitin chains. Interacts with TRIM5. Interacts with TRIM38 (via B30.2/SPRY domain), leading to its translocation to lysosomes and degradation. Interacts with ASB1. In terms of assembly, (Microbial infection) Interacts with M.tuberculosis PtpA, which blocks the NF-kappa-B signaling pathway. Ubiquitinated; following IL1 stimulation or TRAF6 overexpression. Ubiquitinated by AMFR via 'Lys-27'-linked polyubiquitination; leading to TAK1/MAP3K7 activation. In terms of processing, degraded in a lysosome-dependent manner following interaction with TRIM38. Post-translationally, phosphorylated at Ser-506 by MAPKAPK2 and MAPKAPK3 following IL1 treatment. (Microbial infection) Methylated at Cys-692 by enteropathogenic E.coli protein NleE or S.flexneri protein OspZ: methylation disrupts zinc-binding and ability to bind 'Lys-63'-linked ubiquitin, leading to NF-kappa-B inactivation. Widely expressed. Constitutively overexpressed in certain tumor tissues. As to expression, major transcript. In terms of tissue distribution, minor transcript.

In terms of biological role, adapter required to activate the JNK and NF-kappa-B signaling pathways through the specific recognition of 'Lys-63'-linked polyubiquitin chains by its RanBP2-type zinc finger (NZF). Acts as an adapter linking MAP3K7/TAK1 and TRAF6 to 'Lys-63'-linked polyubiquitin chains. The RanBP2-type zinc finger (NZF) specifically recognizes Lys-63'-linked polyubiquitin chains unanchored or anchored to the substrate proteins such as RIPK1/RIP1 and RIPK2: this acts as a scaffold to organize a large signaling complex to promote autophosphorylation of MAP3K7/TAK1, and subsequent activation of I-kappa-B-kinase (IKK) core complex by MAP3K7/TAK1. Functionally, may be an oncogenic factor. In Homo sapiens (Human), this protein is TGF-beta-activated kinase 1 and MAP3K7-binding protein 3.